The sequence spans 395 residues: Putative transcription factor 079L (395 aa).

Belongs to the IIV-6 282R family.

Functionally, transcription activation. This is Putative transcription factor 079L from Aedes vexans (Inland floodwater mosquito).